A 69-amino-acid polypeptide reads, in one-letter code: Conopeptide Y-Fe1 (69 aa).

A signal peptide spans 1–20 (MSKLGVVLFVFLLLLPLAAP). A propeptide spanning residues 21 to 69 (QPVGDQPADQPADRNAEARGTYLYPFSYYRLWRYFTRFLHKQPYYYVHI) is cleaved from the precursor.

Belongs to the conotoxin M superfamily. Conopeptide Y family. As to expression, expressed by the venom duct.

The protein localises to the secreted. In terms of biological role, tyrosine-rich conopeptide that specifically targets voltage-gated potassium channel Kv1.6/KCNA6 (IC(50) is 8.8 uM) that is expressed in Xenopus oocytes. In vivo, causes seizures (at 5 nmol) and death (20 nmol) when intracranially injected into mice, and causes paralysis (at 10 pmol) to C.elegans. In Conus ferrugineus (Cone snail), this protein is Conopeptide Y-Fe1.